A 454-amino-acid chain; its full sequence is Bifunctional protein GlmU (454 aa).

The tract at residues 1–226 (MSLDIVILAA…AMEVQGANDR (226 aa)) is pyrophosphorylase. UDP-N-acetyl-alpha-D-glucosamine-binding positions include 8 to 11 (LAAG), Lys22, Gln73, 78 to 79 (GT), 99 to 101 (YGD), Gly136, Glu151, Asn166, and Asn224. Asp101 is a Mg(2+) binding site. Asn224 contacts Mg(2+). The segment at 227-247 (LQLAQLERHYQSRVARRLMAQ) is linker. The N-acetyltransferase stretch occupies residues 248–454 (GVTLRDPARF…GWQRPTKQKK (207 aa)). UDP-N-acetyl-alpha-D-glucosamine is bound by residues Arg330 and Lys348. The Proton acceptor role is filled by His360. UDP-N-acetyl-alpha-D-glucosamine is bound by residues Tyr363 and Asn374. Acetyl-CoA is bound by residues Ala377, 383 to 384 (NY), Ser402, Ala420, and Arg437.

This sequence in the N-terminal section; belongs to the N-acetylglucosamine-1-phosphate uridyltransferase family. The protein in the C-terminal section; belongs to the transferase hexapeptide repeat family. Homotrimer. Mg(2+) is required as a cofactor.

Its subcellular location is the cytoplasm. The catalysed reaction is alpha-D-glucosamine 1-phosphate + acetyl-CoA = N-acetyl-alpha-D-glucosamine 1-phosphate + CoA + H(+). The enzyme catalyses N-acetyl-alpha-D-glucosamine 1-phosphate + UTP + H(+) = UDP-N-acetyl-alpha-D-glucosamine + diphosphate. It functions in the pathway nucleotide-sugar biosynthesis; UDP-N-acetyl-alpha-D-glucosamine biosynthesis; N-acetyl-alpha-D-glucosamine 1-phosphate from alpha-D-glucosamine 6-phosphate (route II): step 2/2. Its pathway is nucleotide-sugar biosynthesis; UDP-N-acetyl-alpha-D-glucosamine biosynthesis; UDP-N-acetyl-alpha-D-glucosamine from N-acetyl-alpha-D-glucosamine 1-phosphate: step 1/1. The protein operates within bacterial outer membrane biogenesis; LPS lipid A biosynthesis. Catalyzes the last two sequential reactions in the de novo biosynthetic pathway for UDP-N-acetylglucosamine (UDP-GlcNAc). The C-terminal domain catalyzes the transfer of acetyl group from acetyl coenzyme A to glucosamine-1-phosphate (GlcN-1-P) to produce N-acetylglucosamine-1-phosphate (GlcNAc-1-P), which is converted into UDP-GlcNAc by the transfer of uridine 5-monophosphate (from uridine 5-triphosphate), a reaction catalyzed by the N-terminal domain. The polypeptide is Bifunctional protein GlmU (Azotobacter vinelandii (strain DJ / ATCC BAA-1303)).